The primary structure comprises 93 residues: Ribonuclease P protein component 4 (93 aa).

Residues Cys55, Cys58, Cys81, and Cys83 each contribute to the Zn(2+) site.

The protein belongs to the eukaryotic/archaeal RNase P protein component 4 family. Consists of a catalytic RNA component and at least 4-5 protein subunits. The cofactor is Zn(2+).

It localises to the cytoplasm. The enzyme catalyses Endonucleolytic cleavage of RNA, removing 5'-extranucleotides from tRNA precursor.. Its function is as follows. Part of ribonuclease P, a protein complex that generates mature tRNA molecules by cleaving their 5'-ends. In Halobacterium salinarum (strain ATCC 29341 / DSM 671 / R1), this protein is Ribonuclease P protein component 4.